The chain runs to 417 residues: Gamma-glutamyl phosphate reductase (417 aa).

Belongs to the gamma-glutamyl phosphate reductase family.

Its subcellular location is the cytoplasm. It catalyses the reaction L-glutamate 5-semialdehyde + phosphate + NADP(+) = L-glutamyl 5-phosphate + NADPH + H(+). It participates in amino-acid biosynthesis; L-proline biosynthesis; L-glutamate 5-semialdehyde from L-glutamate: step 2/2. Functionally, catalyzes the NADPH-dependent reduction of L-glutamate 5-phosphate into L-glutamate 5-semialdehyde and phosphate. The product spontaneously undergoes cyclization to form 1-pyrroline-5-carboxylate. The chain is Gamma-glutamyl phosphate reductase from Escherichia coli (strain 55989 / EAEC).